Reading from the N-terminus, the 203-residue chain is Holliday junction branch migration complex subunit RuvA (203 aa).

The interval 1 to 61 (MIIYKYGKIM…EYTKVTYGFD (61 aa)) is domain I. The segment at 62–139 (NFKELVIFED…KFMKKLTSDE (78 aa)) is domain II. The segment at 140-147 (AAKIKVPA) is flexible linker. The interval 147-203 (ASSENENKFLDTMKMLGFKQQQIKFALDKIELNDDIETCVENAIKLISQQQHETSRV) is domain III.

It belongs to the RuvA family. In terms of assembly, homotetramer. Forms an RuvA(8)-RuvB(12)-Holliday junction (HJ) complex. HJ DNA is sandwiched between 2 RuvA tetramers; dsDNA enters through RuvA and exits via RuvB. An RuvB hexamer assembles on each DNA strand where it exits the tetramer. Each RuvB hexamer is contacted by two RuvA subunits (via domain III) on 2 adjacent RuvB subunits; this complex drives branch migration. In the full resolvosome a probable DNA-RuvA(4)-RuvB(12)-RuvC(2) complex forms which resolves the HJ.

It is found in the cytoplasm. Functionally, the RuvA-RuvB-RuvC complex processes Holliday junction (HJ) DNA during genetic recombination and DNA repair, while the RuvA-RuvB complex plays an important role in the rescue of blocked DNA replication forks via replication fork reversal (RFR). RuvA specifically binds to HJ cruciform DNA, conferring on it an open structure. The RuvB hexamer acts as an ATP-dependent pump, pulling dsDNA into and through the RuvAB complex. HJ branch migration allows RuvC to scan DNA until it finds its consensus sequence, where it cleaves and resolves the cruciform DNA. This chain is Holliday junction branch migration complex subunit RuvA, found in Metamycoplasma arthritidis (strain 158L3-1) (Mycoplasma arthritidis).